The sequence spans 136 residues: Protein scalloped (136 aa).

Its subcellular location is the nucleus. Its function is as follows. Probable transcription factor that function in the regulation of cell-specific gene expression during drosophila development, particularly in the differentiation of the nervous system. In Junonia coenia (Peacock butterfly), this protein is Protein scalloped (SD).